Reading from the N-terminus, the 188-residue chain is dCTP deaminase (188 aa).

DCTP contacts are provided by residues 111-116 (KSTYAR), 135-137 (TLE), Gln-156, Tyr-170, and Gln-180. Glu-137 functions as the Proton donor/acceptor in the catalytic mechanism.

It belongs to the dCTP deaminase family. Homotrimer.

It carries out the reaction dCTP + H2O + H(+) = dUTP + NH4(+). It functions in the pathway pyrimidine metabolism; dUMP biosynthesis; dUMP from dCTP (dUTP route): step 1/2. Its function is as follows. Catalyzes the deamination of dCTP to dUTP. This Pseudomonas syringae pv. tomato (strain ATCC BAA-871 / DC3000) protein is dCTP deaminase.